The sequence spans 364 residues: Endopolygalacturonase B (364 aa).

Residues 1–20 form the signal peptide; the sequence is MHFLQNSLIAAAMGAALVAA. Residues 21–29 constitute a propeptide that is removed on maturation; it reads APAADLDAR. C32 and C47 are oxidised to a cystine. N-linked (GlcNAc...) asparagine glycosylation occurs at N138. PbH1 repeat units follow at residues 159-188, 189-210, 211-231, 240-261, 269-291, and 303-348; these read SDHL…DIGS, STYI…AINS, GEHI…SIGS, VKSV…RIKT, VTDV…IVEQ, and TNGV…DITG. The Proton donor role is filled by D203. A disulfide bridge connects residues C205 and C221. The active site involves H225. Intrachain disulfides connect C331–C336 and C355–C364.

It belongs to the glycosyl hydrolase 28 family.

It is found in the secreted. It carries out the reaction (1,4-alpha-D-galacturonosyl)n+m + H2O = (1,4-alpha-D-galacturonosyl)n + (1,4-alpha-D-galacturonosyl)m.. Involved in maceration and soft-rotting of plant tissue. Hydrolyzes the 1,4-alpha glycosidic bonds of de-esterified pectate in the smooth region of the plant cell wall. The polypeptide is Endopolygalacturonase B (pgaB) (Emericella nidulans (strain FGSC A4 / ATCC 38163 / CBS 112.46 / NRRL 194 / M139) (Aspergillus nidulans)).